The primary structure comprises 78 residues: Delta-conotoxin-like CVIE (78 aa).

Positions 1-22 (MKLTCMMIVAVLFLTAWTFVTA) are cleaved as a signal peptide. Residues 23–49 (DDSRNGLKNLFPKARHEMKNPEASKLN) constitute a propeptide that is removed on maturation. Disulfide bonds link Cys-54–Cys-69, Cys-61–Cys-73, and Cys-68–Cys-77. At Pro-65 the chain carries 4-hydroxyproline.

It belongs to the conotoxin O1 superfamily. As to expression, expressed by the venom duct.

It is found in the secreted. Functionally, delta-conotoxins bind to site 6 of voltage-gated sodium channels (Nav) and inhibit the inactivation process. In Conus catus (Cat cone), this protein is Delta-conotoxin-like CVIE.